A 265-amino-acid polypeptide reads, in one-letter code: 3-methyl-2-oxobutanoate hydroxymethyltransferase (265 aa).

Mg(2+)-binding residues include D44 and D83. 3-methyl-2-oxobutanoate-binding positions include 44-45 (DS), D83, and K113. E115 lines the Mg(2+) pocket. E182 (proton acceptor) is an active-site residue.

This sequence belongs to the PanB family. As to quaternary structure, homodecamer; pentamer of dimers. Mg(2+) serves as cofactor.

It is found in the cytoplasm. It carries out the reaction 3-methyl-2-oxobutanoate + (6R)-5,10-methylene-5,6,7,8-tetrahydrofolate + H2O = 2-dehydropantoate + (6S)-5,6,7,8-tetrahydrofolate. It functions in the pathway cofactor biosynthesis; (R)-pantothenate biosynthesis; (R)-pantoate from 3-methyl-2-oxobutanoate: step 1/2. Its function is as follows. Catalyzes the reversible reaction in which hydroxymethyl group from 5,10-methylenetetrahydrofolate is transferred onto alpha-ketoisovalerate to form ketopantoate. This Aquifex aeolicus (strain VF5) protein is 3-methyl-2-oxobutanoate hydroxymethyltransferase.